A 120-amino-acid polypeptide reads, in one-letter code: Large ribosomal subunit protein uL18 (120 aa).

This sequence belongs to the universal ribosomal protein uL18 family. As to quaternary structure, part of the 50S ribosomal subunit; part of the 5S rRNA/L5/L18/L25 subcomplex. Contacts the 5S and 23S rRNAs.

This is one of the proteins that bind and probably mediate the attachment of the 5S RNA into the large ribosomal subunit, where it forms part of the central protuberance. The sequence is that of Large ribosomal subunit protein uL18 from Bartonella henselae (strain ATCC 49882 / DSM 28221 / CCUG 30454 / Houston 1) (Rochalimaea henselae).